The sequence spans 204 residues: Putative rubrerythrin (204 aa).

In terms of domain architecture, Ferritin-like diiron spans 1-159; that stretch reads MINNFFVINM…KLLKEVEEGT (159 aa). Fe(3+) contacts are provided by Glu24, Glu57, Glu107, Glu110, Glu141, His144, Cys171, Cys174, Cys187, and Cys190. In terms of domain architecture, Rubredoxin-like spans 166–204; that stretch reads PVEWVCRKCGFVHLGKEPPEKCPSCSHPRKYFEVKCEKY.

As to quaternary structure, homodimer. Possesses two rubredoxin-like centers and two non-sulfur oxo-bridged di-iron centers per dimer. It depends on Fe(3+) as a cofactor.

Its subcellular location is the cytoplasm. Functionally, may provide oxidative stress protection via catalytic reduction of intracellular hydrogen peroxide. The sequence is that of Putative rubrerythrin from Methanocaldococcus jannaschii (strain ATCC 43067 / DSM 2661 / JAL-1 / JCM 10045 / NBRC 100440) (Methanococcus jannaschii).